The following is a 178-amino-acid chain: Tetratricopeptide repeat protein 9C (178 aa).

TPR repeat units follow at residues 15-48, 79-114, and 115-148; these read ASSF…LRSL, ADCY…QPEN, and VKAL…APKD.

It belongs to the TTC9 family.

This is Tetratricopeptide repeat protein 9C (ttc9c) from Xenopus tropicalis (Western clawed frog).